A 518-amino-acid chain; its full sequence is Laccase (518 aa).

Residues 1 to 21 form the signal peptide; sequence MSRFQSLLSFVLVSLAAVANA. 2 consecutive Plastocyanin-like domains span residues 23-148 and 160-302; these read IGPV…FVVY and IDND…ILRY. Asn-72 and Asn-75 each carry an N-linked (GlcNAc...) asparagine glycan. Cu cation contacts are provided by His-85, His-87, His-130, and His-132. 2 disulfides stabilise this stretch: Cys-106–Cys-507 and Cys-138–Cys-226. An N-linked (GlcNAc...) asparagine glycan is attached at Asn-229. The segment at 308 to 330 is disordered; that stretch reads VEPTTTQTTSTKPLNEADLHPLT. Residues Asn-354, Asn-362, and Asn-398 are each glycosylated (N-linked (GlcNAc...) asparagine). A Plastocyanin-like 3 domain is found at 369-489; it reads SVPVLLQILS…AGFAVVLAED (121 aa). Cu cation-binding residues include His-416, His-419, His-421, His-471, Cys-472, His-473, and His-477.

Belongs to the multicopper oxidase family. Requires Cu cation as cofactor.

Its subcellular location is the secreted. It catalyses the reaction 4 hydroquinone + O2 = 4 benzosemiquinone + 2 H2O. Its function is as follows. Lignin degradation and detoxification of lignin-derived products. Cleaves the C-C and C-O bonds of some phenolic lignin model compounds (such as O- and P-quinols, aminophenols and phenylenediamine). May also be involved in synthesis of phenoxazinone pigments. The chain is Laccase (LCC3-1) from Pycnoporus cinnabarinus (Cinnabar-red polypore).